The following is a 412-amino-acid chain: Serine hydroxymethyltransferase (412 aa).

Residues Leu-117 and 121–123 contribute to the (6S)-5,6,7,8-tetrahydrofolate site; that span reads GHL. Lys-226 carries the post-translational modification N6-(pyridoxal phosphate)lysine. 349–351 provides a ligand contact to (6S)-5,6,7,8-tetrahydrofolate; that stretch reads SPF.

The protein belongs to the SHMT family. As to quaternary structure, homodimer. Requires pyridoxal 5'-phosphate as cofactor.

It is found in the cytoplasm. The catalysed reaction is (6R)-5,10-methylene-5,6,7,8-tetrahydrofolate + glycine + H2O = (6S)-5,6,7,8-tetrahydrofolate + L-serine. Its pathway is one-carbon metabolism; tetrahydrofolate interconversion. The protein operates within amino-acid biosynthesis; glycine biosynthesis; glycine from L-serine: step 1/1. In terms of biological role, catalyzes the reversible interconversion of serine and glycine with tetrahydrofolate (THF) serving as the one-carbon carrier. This reaction serves as the major source of one-carbon groups required for the biosynthesis of purines, thymidylate, methionine, and other important biomolecules. Also exhibits THF-independent aldolase activity toward beta-hydroxyamino acids, producing glycine and aldehydes, via a retro-aldol mechanism. This chain is Serine hydroxymethyltransferase, found in Geobacillus kaustophilus (strain HTA426).